A 154-amino-acid chain; its full sequence is Cytochrome c-type biogenesis protein CcmE (154 aa).

Topologically, residues 1-8 (MHPQRKQR) are cytoplasmic. Residues 9-29 (LMIVLFIVVFSSLAVGLIAYA) traverse the membrane as a helical; Signal-anchor for type II membrane protein segment. The Periplasmic portion of the chain corresponds to 30–154 (LRENINLFYP…ATCGGLNYGA (125 aa)). Positions 124 and 128 each coordinate heme.

Belongs to the CcmE/CycJ family.

It localises to the cell inner membrane. Heme chaperone required for the biogenesis of c-type cytochromes. Transiently binds heme delivered by CcmC and transfers the heme to apo-cytochromes in a process facilitated by CcmF and CcmH. The sequence is that of Cytochrome c-type biogenesis protein CcmE from Cellvibrio japonicus (strain Ueda107) (Pseudomonas fluorescens subsp. cellulosa).